We begin with the raw amino-acid sequence, 334 residues long: GTPase Obg (334 aa).

An Obg domain is found at 1–159 (MRFVDEVVIK…KEVRLELNLL (159 aa)). The OBG-type G domain occupies 160–331 (ADVALLGLPN…LAKKLNEFLQ (172 aa)). GTP is bound by residues 166–173 (GLPNAGKS), 191–195 (FTTMY), 212–215 (DIPG), 282–285 (NKID), and 312–314 (SAA). Residues Ser173 and Thr193 each coordinate Mg(2+).

This sequence belongs to the TRAFAC class OBG-HflX-like GTPase superfamily. OBG GTPase family. As to quaternary structure, monomer. The cofactor is Mg(2+).

It is found in the cytoplasm. Its function is as follows. An essential GTPase which binds GTP, GDP and possibly (p)ppGpp with moderate affinity, with high nucleotide exchange rates and a fairly low GTP hydrolysis rate. Plays a role in control of the cell cycle, stress response, ribosome biogenesis and in those bacteria that undergo differentiation, in morphogenesis control. The polypeptide is GTPase Obg (Francisella tularensis subsp. mediasiatica (strain FSC147)).